The sequence spans 358 residues: Small ribosomal subunit biogenesis GTPase RsgA 2 (358 aa).

The CP-type G domain maps to Ala-106–Ile-261. Residues Ser-151–Asp-154 and Gly-203–Thr-211 each bind GTP. Zn(2+)-binding residues include Cys-284, Cys-289, His-291, and Cys-297.

It belongs to the TRAFAC class YlqF/YawG GTPase family. RsgA subfamily. As to quaternary structure, monomer. Associates with 30S ribosomal subunit, binds 16S rRNA. Zn(2+) serves as cofactor.

The protein localises to the cytoplasm. One of several proteins that assist in the late maturation steps of the functional core of the 30S ribosomal subunit. Helps release RbfA from mature subunits. May play a role in the assembly of ribosomal proteins into the subunit. Circularly permuted GTPase that catalyzes slow GTP hydrolysis, GTPase activity is stimulated by the 30S ribosomal subunit. The polypeptide is Small ribosomal subunit biogenesis GTPase RsgA 2 (Vibrio parahaemolyticus serotype O3:K6 (strain RIMD 2210633)).